The primary structure comprises 308 residues: GTP cyclohydrolase FolE2 (308 aa).

The protein belongs to the GTP cyclohydrolase IV family.

The catalysed reaction is GTP + H2O = 7,8-dihydroneopterin 3'-triphosphate + formate + H(+). The protein operates within cofactor biosynthesis; 7,8-dihydroneopterin triphosphate biosynthesis; 7,8-dihydroneopterin triphosphate from GTP: step 1/1. Converts GTP to 7,8-dihydroneopterin triphosphate. The sequence is that of GTP cyclohydrolase FolE2 from Idiomarina loihiensis (strain ATCC BAA-735 / DSM 15497 / L2-TR).